We begin with the raw amino-acid sequence, 204 residues long: Octanoyltransferase (204 aa).

The 176-residue stretch at 27–202 (QGGEEALLLL…RFQPLLNLHL (176 aa)) folds into the BPL/LPL catalytic domain. Substrate-binding positions include 65–72 (RGGDVTYH), 132–134 (SIG), and 145–147 (GFA). Residue Cys163 is the Acyl-thioester intermediate of the active site.

It belongs to the LipB family.

Its subcellular location is the cytoplasm. The catalysed reaction is octanoyl-[ACP] + L-lysyl-[protein] = N(6)-octanoyl-L-lysyl-[protein] + holo-[ACP] + H(+). It functions in the pathway protein modification; protein lipoylation via endogenous pathway; protein N(6)-(lipoyl)lysine from octanoyl-[acyl-carrier-protein]: step 1/2. Catalyzes the transfer of endogenously produced octanoic acid from octanoyl-acyl-carrier-protein onto the lipoyl domains of lipoate-dependent enzymes. Lipoyl-ACP can also act as a substrate although octanoyl-ACP is likely to be the physiological substrate. In Citrifermentans bemidjiense (strain ATCC BAA-1014 / DSM 16622 / JCM 12645 / Bem) (Geobacter bemidjiensis), this protein is Octanoyltransferase.